The chain runs to 202 residues: MKRIVIIDYGLGNLRSVQKGLEHVGANPAISGNPEEILTADGIILPGVGAFIDAMKCLIPLKGVIAEFAESGKPMLGICLGQQVLMSSSEEGRLTGGLDLIQGRVLRFPKSELKVPHMGWNNIRIKQDHPLFKGISDGSFVYFVHSYYVDTTAENTLASCEYGLDFSASVVNSKGNVMGTQFHPEKSGTTGLKILKNFVEMC.

Positions 3–202 (RIVIIDYGLG…KILKNFVEMC (200 aa)) constitute a Glutamine amidotransferase type-1 domain. C79 (nucleophile) is an active-site residue. Catalysis depends on residues H183 and E185.

As to quaternary structure, heterodimer of HisH and HisF.

The protein localises to the cytoplasm. It catalyses the reaction 5-[(5-phospho-1-deoxy-D-ribulos-1-ylimino)methylamino]-1-(5-phospho-beta-D-ribosyl)imidazole-4-carboxamide + L-glutamine = D-erythro-1-(imidazol-4-yl)glycerol 3-phosphate + 5-amino-1-(5-phospho-beta-D-ribosyl)imidazole-4-carboxamide + L-glutamate + H(+). It carries out the reaction L-glutamine + H2O = L-glutamate + NH4(+). It functions in the pathway amino-acid biosynthesis; L-histidine biosynthesis; L-histidine from 5-phospho-alpha-D-ribose 1-diphosphate: step 5/9. IGPS catalyzes the conversion of PRFAR and glutamine to IGP, AICAR and glutamate. The HisH subunit catalyzes the hydrolysis of glutamine to glutamate and ammonia as part of the synthesis of IGP and AICAR. The resulting ammonia molecule is channeled to the active site of HisF. This Methanosarcina acetivorans (strain ATCC 35395 / DSM 2834 / JCM 12185 / C2A) protein is Imidazole glycerol phosphate synthase subunit HisH.